Here is a 175-residue protein sequence, read N- to C-terminus: Co-chaperone protein daf-41 (175 aa).

One can recognise a CS domain in the interval 2-89 (AKQPTVLWAQ…KTPAWWPRLL (88 aa)). Residues 109–175 (DEDDEAEDAG…EEEGKNGTRA (67 aa)) are disordered. A compositionally biased stretch (acidic residues) spans 148-168 (GLEDDEEDDDMPDLEDNEEEE).

This sequence belongs to the p23/wos2 family. Expressed in anterior and posterior neurons including ASE, AWC, ASI and ADL amphids and phasmid sensory neurons, peripheral neurons and ventral cord motorneurons. Additionally expressed in body wall muscle, pharynx, vulva, germ cells and intestine.

Co-chaperone for hsp90/daf-21. Involved in regulation of longevity, larval entry and exit from the dauer stage of development and response to environmental cues, such as oxidative stress, in a temperature-dependent manner. Role in daf-16 and hsf-1 inhibition at elevated temperatures. The polypeptide is Co-chaperone protein daf-41 (Caenorhabditis elegans).